The sequence spans 156 residues: Small ribosomal subunit protein uS7 (156 aa).

This sequence belongs to the universal ribosomal protein uS7 family. In terms of assembly, part of the 30S ribosomal subunit. Contacts proteins S9 and S11.

One of the primary rRNA binding proteins, it binds directly to 16S rRNA where it nucleates assembly of the head domain of the 30S subunit. Is located at the subunit interface close to the decoding center, probably blocks exit of the E-site tRNA. The chain is Small ribosomal subunit protein uS7 from Limosilactobacillus fermentum (strain NBRC 3956 / LMG 18251) (Lactobacillus fermentum).